Here is a 569-residue protein sequence, read N- to C-terminus: AA9 family lytic polysaccharide monooxygenase A (569 aa).

The first 16 residues, 1–16 (MRIFSLALGFLPLVAG), serve as a signal peptide directing secretion. The Cu(2+) site is built by H17 and H99. A disulfide bridge links C59 with C189. An N-linked (GlcNAc...) asparagine glycan is attached at N112. O2-binding residues include H174 and Q184. Y186 serves as a coordination point for Cu(2+). N-linked (GlcNAc...) asparagine glycans are attached at residues N244 and N381. The span at 399-424 (AADATATATATTEDAEATTAAEAAAT) shows a compositional bias: low complexity. Positions 399-439 (AADATATATATTEDAEATTAAEAAATSGAGRPGRGHGHGRG) are disordered. N-linked (GlcNAc...) asparagine glycosylation occurs at N472.

The protein belongs to the polysaccharide monooxygenase AA9 family. Requires Cu(2+) as cofactor.

It is found in the secreted. It catalyses the reaction [(1-&gt;4)-beta-D-glucosyl]n+m + reduced acceptor + O2 = 4-dehydro-beta-D-glucosyl-[(1-&gt;4)-beta-D-glucosyl]n-1 + [(1-&gt;4)-beta-D-glucosyl]m + acceptor + H2O.. Its function is as follows. Lytic polysaccharide monooxygenase (LPMO) that depolymerizes crystalline and amorphous polysaccharides via the oxidation of scissile alpha- or beta-(1-4)-glycosidic bonds, yielding C4 oxidation products. Catalysis by LPMOs requires the reduction of the active-site copper from Cu(II) to Cu(I) by a reducing agent and H(2)O(2) or O(2) as a cosubstrate. The chain is AA9 family lytic polysaccharide monooxygenase A from Emericella nidulans (strain FGSC A4 / ATCC 38163 / CBS 112.46 / NRRL 194 / M139) (Aspergillus nidulans).